A 69-amino-acid chain; its full sequence is Cold shock-like protein CspC (69 aa).

Residues 6–66 enclose the CSD domain; it reads GQVKWFNESK…GQKGPAAVNV (61 aa).

It is found in the cytoplasm. This Shigella flexneri protein is Cold shock-like protein CspC (cspC).